The following is a 484-amino-acid chain: uncharacterized protein (484 aa).

Residues 14–82 (VPLHRQIEQY…KGGGTKVVNS (69 aa)) form the HTH gntR-type domain. The segment at residues 42–61 (QRTLADMFQVNRSTVTAAID) is a DNA-binding region (H-T-H motif). At Lys-327 the chain carries N6-(pyridoxal phosphate)lysine.

In the C-terminal section; belongs to the class-I pyridoxal-phosphate-dependent aminotransferase family. Pyridoxal 5'-phosphate serves as cofactor.

This is an uncharacterized protein from Bacillus subtilis (strain 168).